The sequence spans 296 residues: Glycine--tRNA ligase alpha subunit (296 aa).

Belongs to the class-II aminoacyl-tRNA synthetase family. In terms of assembly, tetramer of two alpha and two beta subunits.

The protein localises to the cytoplasm. The enzyme catalyses tRNA(Gly) + glycine + ATP = glycyl-tRNA(Gly) + AMP + diphosphate. This chain is Glycine--tRNA ligase alpha subunit, found in Synechococcus sp. (strain WH7803).